The primary structure comprises 554 residues: ATP synthase subunit alpha (554 aa).

Position 172–179 (172–179 (GDRKTGKT)) interacts with ATP. A disordered region spans residues 528-554 (LDEEELEKESVKVKKPAPEKKAKKEQK). A compositionally biased stretch (basic and acidic residues) spans 535–554 (KESVKVKKPAPEKKAKKEQK).

The protein belongs to the ATPase alpha/beta chains family. F-type ATPases have 2 components, CF(1) - the catalytic core - and CF(0) - the membrane proton channel. CF(1) has five subunits: alpha(3), beta(3), gamma(1), delta(1), epsilon(1). CF(0) has three main subunits: a(1), b(2) and c(9-12). The alpha and beta chains form an alternating ring which encloses part of the gamma chain. CF(1) is attached to CF(0) by a central stalk formed by the gamma and epsilon chains, while a peripheral stalk is formed by the delta and b chains.

Its subcellular location is the cell membrane. The enzyme catalyses ATP + H2O + 4 H(+)(in) = ADP + phosphate + 5 H(+)(out). Functionally, produces ATP from ADP in the presence of a proton gradient across the membrane. The alpha chain is a regulatory subunit. This Mycolicibacterium paratuberculosis (strain ATCC BAA-968 / K-10) (Mycobacterium paratuberculosis) protein is ATP synthase subunit alpha.